A 473-amino-acid polypeptide reads, in one-letter code: Inactive levansucrase (473 aa).

An N-terminal signal peptide occupies residues 1-29 (MNIKKFAKQATVLTFTTALLAGGATQAFA).

The protein belongs to the glycosyl hydrolase 68 family.

Its subcellular location is the secreted. The sequence is that of Inactive levansucrase (sacB) from Geobacillus stearothermophilus (Bacillus stearothermophilus).